We begin with the raw amino-acid sequence, 93 residues long: U12-lycotoxin-Ls1c (93 aa).

The N-terminal stretch at 1-18 (MKFAVILLFSLVVLAVAS) is a signal peptide. The propeptide occupies 19-38 (ESVEEVRREIDIEDLPEQQR).

This sequence belongs to the neurotoxin 31 family. Contains 5 disulfide bonds. Expressed by the venom gland.

The protein resides in the secreted. The polypeptide is U12-lycotoxin-Ls1c (Lycosa singoriensis (Wolf spider)).